A 338-amino-acid chain; its full sequence is S-adenosylmethionine:tRNA ribosyltransferase-isomerase (338 aa).

The protein belongs to the QueA family. Monomer.

The protein resides in the cytoplasm. It catalyses the reaction 7-aminomethyl-7-carbaguanosine(34) in tRNA + S-adenosyl-L-methionine = epoxyqueuosine(34) in tRNA + adenine + L-methionine + 2 H(+). It functions in the pathway tRNA modification; tRNA-queuosine biosynthesis. In terms of biological role, transfers and isomerizes the ribose moiety from AdoMet to the 7-aminomethyl group of 7-deazaguanine (preQ1-tRNA) to give epoxyqueuosine (oQ-tRNA). This is S-adenosylmethionine:tRNA ribosyltransferase-isomerase from Francisella tularensis subsp. tularensis (strain WY96-3418).